The chain runs to 1241 residues: DNA-directed RNA polymerase subunit beta (1241 aa).

Positions 1201-1224 are disordered; it reads AEEEQDTDVDYITEDDFESPDPEI.

The protein belongs to the RNA polymerase beta chain family. As to quaternary structure, the RNAP catalytic core consists of 2 alpha, 1 beta, 1 beta' and 1 omega subunit. When a sigma factor is associated with the core the holoenzyme is formed, which can initiate transcription.

It carries out the reaction RNA(n) + a ribonucleoside 5'-triphosphate = RNA(n+1) + diphosphate. Its function is as follows. DNA-dependent RNA polymerase catalyzes the transcription of DNA into RNA using the four ribonucleoside triphosphates as substrates. The polypeptide is DNA-directed RNA polymerase subunit beta (Alkaliphilus oremlandii (strain OhILAs) (Clostridium oremlandii (strain OhILAs))).